Reading from the N-terminus, the 309-residue chain is Probable RuBisCO transcriptional regulator (309 aa).

One can recognise an HTH lysR-type domain in the interval 5 to 62; that stretch reads FTLQQLRILKAIATEKSFTRAAEVLFVSQPSLSKQIKTLESRLNISLLNRENNIVSLT. Residues 22–41 constitute a DNA-binding region (H-T-H motif); sequence FTRAAEVLFVSQPSLSKQIK.

Belongs to the LysR transcriptional regulatory family.

The protein localises to the plastid. Its subcellular location is the chloroplast. Its function is as follows. Trans-acting transcriptional regulator of RuBisCO genes (rbcL and rbcS) expression. This is Probable RuBisCO transcriptional regulator (rbcR) from Trieres chinensis (Marine centric diatom).